A 225-amino-acid chain; its full sequence is Urease accessory protein UreF (225 aa).

The protein belongs to the UreF family. UreD, UreF and UreG form a complex that acts as a GTP-hydrolysis-dependent molecular chaperone, activating the urease apoprotein by helping to assemble the nickel containing metallocenter of UreC. The UreE protein probably delivers the nickel.

The protein localises to the cytoplasm. In terms of biological role, required for maturation of urease via the functional incorporation of the urease nickel metallocenter. The protein is Urease accessory protein UreF of Geobacillus kaustophilus (strain HTA426).